The following is a 616-amino-acid chain: MEDDKIQMETVSIDLAKDTAVNMALRILFTQIFTPYSIVSIDGKQLSKDVIDEISGLIDRHIRDLQLAFSDFLLKGKCYLYKLHYINPNSMNFKERKHWNPQKGRYEYCITYTIKRNNAERWWEVDTEEDVRVVIAPMELRQHFPADVEFYDEKYLGVYYNPIPIHETIQEIADQKNTLALKVLPLMVQKTLIPTIIGITQNTKAGEIIKKALSNHQNRTRVYIPATPDEVKFETISIGKDIPTDLIETMLYYYDSAIFMGLGTSISIVKASGQELTTSRTVDRNILRIVQGYQQEIERWIADQLEKMGYKGIWVKFANPDPDWEINMLQKAKMVAELKAQEQVAKYDFSALIERIFPSNEFGEILAAYPDLTEKEVEKLLKMAKEGKGGLEYADEEKQKLLEKKRKSLEKIISKLEKVGDKFGKKSMENFVNWILETYERLGYNELMQDWDELLREFTREEVDMFFLDYVAPTLNSLKIYDDLDQQTIDILKQHWEQAFYNIYSSYSQQFLDVLTEGIQKGLGEEEIAKNLKKVAKDVKGSRLQMRAREEMNKTYNLTRARRFWNDKVIYVTMKDERVRPSHRKLHGLIFVPAERPELVPPLGYGCRCTITPVRD.

This is an uncharacterized protein from Methanocaldococcus jannaschii (strain ATCC 43067 / DSM 2661 / JAL-1 / JCM 10045 / NBRC 100440) (Methanococcus jannaschii).